A 313-amino-acid polypeptide reads, in one-letter code: Small ribosomal subunit protein uS2 (313 aa).

The disordered stretch occupies residues 281 to 301; the sequence is AAPAAPAVEPAPEAAQEATAE.

The protein belongs to the universal ribosomal protein uS2 family.

In Caulobacter sp. (strain K31), this protein is Small ribosomal subunit protein uS2.